The sequence spans 166 residues: Urease accessory protein UreE (166 aa).

The interval 132 to 156 is disordered; the sequence is FQPEHGAYGGGHHHSRHGDEDFNYP.

Belongs to the UreE family.

The protein resides in the cytoplasm. Its function is as follows. Involved in urease metallocenter assembly. Binds nickel. Probably functions as a nickel donor during metallocenter assembly. The chain is Urease accessory protein UreE from Pseudomonas fluorescens (strain ATCC BAA-477 / NRRL B-23932 / Pf-5).